A 689-amino-acid chain; its full sequence is tRNA wybutosine-synthesizing protein 4 (689 aa).

Positions 1-33 (MTSTSKLDANQLARQRKKLEKDRRKKVYDDQQV) are disordered. Residues 14–26 (RQRKKLEKDRRKK) are compositionally biased toward basic residues. Residues R84, G111, D137, 183 to 184 (DL), and E215 each bind S-adenosyl-L-methionine.

The protein belongs to the methyltransferase superfamily. LCMT family.

It catalyses the reaction 7-[(3S)-3-amino-3-carboxypropyl]wyosine(37) in tRNA(Phe) + S-adenosyl-L-methionine = 7-[(3S)-(3-amino-3-methoxycarbonyl)propyl]wyosine(37) in tRNA(Phe) + S-adenosyl-L-homocysteine. The catalysed reaction is 7-[(3S)-(3-amino-3-methoxycarbonyl)propyl]wyosine(37) in tRNA(Phe) + S-adenosyl-L-methionine + CO2 = wybutosine(37) in tRNA(Phe) + S-adenosyl-L-homocysteine + 2 H(+). The protein operates within tRNA modification; wybutosine-tRNA(Phe) biosynthesis. Functionally, probable S-adenosyl-L-methionine-dependent methyltransferase that acts as a component of the wybutosine biosynthesis pathway. Wybutosine is a hyper modified guanosine with a tricyclic base found at the 3'-position adjacent to the anticodon of eukaryotic phenylalanine tRNA. May methylate the carboxyl group of leucine residues to form alpha-leucine ester residues. This chain is tRNA wybutosine-synthesizing protein 4 (PPM2), found in Candida albicans (strain SC5314 / ATCC MYA-2876) (Yeast).